The sequence spans 591 residues: L-fucose isomerase (591 aa).

Residues Glu337 and Asp361 each act as proton acceptor in the active site. 3 residues coordinate Mn(2+): Glu337, Asp361, and His528.

This sequence belongs to the L-fucose isomerase family. As to quaternary structure, homohexamer. Mn(2+) serves as cofactor.

It localises to the cytoplasm. The enzyme catalyses L-fucose = L-fuculose. The protein operates within carbohydrate degradation; L-fucose degradation; L-lactaldehyde and glycerone phosphate from L-fucose: step 1/3. In terms of biological role, converts the aldose L-fucose into the corresponding ketose L-fuculose. The sequence is that of L-fucose isomerase from Salmonella arizonae (strain ATCC BAA-731 / CDC346-86 / RSK2980).